The sequence spans 474 residues: MTGDAVGRIVRVTGSVVDVEFSRNNLPGVFNALKTRVNRSGKEIEITLEVAQHLGDDLVRTVAMQSTDGLIRGQEVLDTGGHITVPVGDATKGRVFNVVGEVLNSNGEDIKFDEYWSIHRKPPEFSLLESKTQLFETGIKVIDLLTPYVQGGKIGLFGGAGVGKTVLIQEMIQRVAQDHGGVSVFAGVGERTREGNDLIREMQDAGVFDKTALVFGQMDEPPGTRLRVALSALTMAEYFRDVQKQDVLLFIDNIFRFTQAGSEVSTLLGRIPSAVGYQPNLADEMGVLQERITSTRGHSITSLQAIYVPADDYTDPAPATTFAHLDATTELSREIASKGLYPAVDPLASTSRILDPKYIGKDHYRVAVTVKQILQRDKELREIIAILGIDELSEEDRVTVARARRIEQFLSQNTYMAKKFTGVDGSTVPLQETIDGFDAICRGDCDHIPEQAFFNVGGLEDVERKWSKLQKELG.

Position 158–165 (158–165 (GGAGVGKT)) interacts with ATP.

Belongs to the ATPase alpha/beta chains family. In terms of assembly, F-type ATPases have 2 components, CF(1) - the catalytic core - and CF(0) - the membrane proton channel. CF(1) has five subunits: alpha(3), beta(3), gamma(1), delta(1), epsilon(1). CF(0) has three main subunits: a(1), b(2) and c(9-12). The alpha and beta chains form an alternating ring which encloses part of the gamma chain. CF(1) is attached to CF(0) by a central stalk formed by the gamma and epsilon chains, while a peripheral stalk is formed by the delta and b chains.

The protein resides in the cell membrane. It catalyses the reaction ATP + H2O + 4 H(+)(in) = ADP + phosphate + 5 H(+)(out). Produces ATP from ADP in the presence of a proton gradient across the membrane. The catalytic sites are hosted primarily by the beta subunits. The protein is ATP synthase subunit beta of Tropheryma whipplei (strain Twist) (Whipple's bacillus).